Consider the following 245-residue polypeptide: 3-deoxy-manno-octulosonate cytidylyltransferase (245 aa).

It belongs to the KdsB family.

It is found in the cytoplasm. The enzyme catalyses 3-deoxy-alpha-D-manno-oct-2-ulosonate + CTP = CMP-3-deoxy-beta-D-manno-octulosonate + diphosphate. It participates in nucleotide-sugar biosynthesis; CMP-3-deoxy-D-manno-octulosonate biosynthesis; CMP-3-deoxy-D-manno-octulosonate from 3-deoxy-D-manno-octulosonate and CTP: step 1/1. The protein operates within bacterial outer membrane biogenesis; lipopolysaccharide biosynthesis. Functionally, activates KDO (a required 8-carbon sugar) for incorporation into bacterial lipopolysaccharide in Gram-negative bacteria. The polypeptide is 3-deoxy-manno-octulosonate cytidylyltransferase (Rhodopseudomonas palustris (strain BisB5)).